The chain runs to 4001 residues: Ankyrin repeat and KH domain-containing protein mask (4001 aa).

Basic and acidic residues predominate over residues 1 to 14 (MNNDAKNHESDDLN). 3 disordered regions span residues 1 to 61 (MNND…NRQL), 91 to 174 (KNEP…GGGS), and 391 to 494 (DTDT…FLLD). Polar residues predominate over residues 15–30 (VRSTAYFNQQTTTNQP). Low complexity predominate over residues 38–61 (NNTGSGSGSNNNNNNTNQNPNRQL). The segment covering 94–117 (PLTTTESSGVLTNTPLPSNSRLKV) has biased composition (polar residues). The segment covering 118–159 (NNNNNTNNTAKMSGTSSSQSSATPTPPTASSSTTTTTTTNIS) has biased composition (low complexity). Residues 160–174 (TGGGGSGSSGGGGGS) show a composition bias toward gly residues. Acidic residues-rich tracts occupy residues 408–425 (SESE…ESDP) and 434–486 (VRED…EDAP). Residue Ser501 is modified to Phosphoserine. ANK repeat units lie at residues 546-575 (SGFS…NVNL), 584-614 (DGES…QVED), 618-647 (KDST…DVNA), 651-680 (TGNT…NVEE), 684-713 (NGHT…GINT), 718-747 (FKES…DQEH), 751-780 (EMHT…QVNM), 784-813 (SFES…NIEE), 817-846 (EGYT…NINA), 851-880 (TQET…NLEL), 881-910 (GAST…NVHA), 914-943 (TGDT…ELEH), 947-976 (GGRT…NVNK), 981-1011 (NDHT…PFHK), and 1014-1043 (DNST…ISPT). 2 disordered regions span residues 1046 to 1067 (AASA…NQMR) and 1306 to 1376 (QPGE…PTAL). Residues 1367–1376 (DNNQPVPTAL) show a composition bias toward polar residues. Phosphoserine is present on residues Ser1389 and Ser1588. Disordered stretches follow at residues 1583–1612 (GDQP…RLGS), 1646–1669 (SDLE…ENTL), 1682–1779 (EDGI…SLPL), 1852–1872 (VVHQ…DGSA), 2084–2108 (MAQH…QQLH), and 2225–2256 (TPAP…KERR). 3 stretches are compositionally biased toward acidic residues: residues 1646-1657 (SDLESECEDDAE), 1685-1704 (IIVE…EEQD), and 1716-1759 (DDED…EPDS). Residues 1760–1776 (DQGTGNNNNNSKSGASS) show a composition bias toward low complexity. Residues 2084–2093 (MAQHQAQQQQ) are compositionally biased toward low complexity. The segment covering 2228–2237 (PSSGVSSTKS) has biased composition (polar residues). 10 ANK repeats span residues 2312–2341 (NHDT…NIEH), 2345–2374 (KGFT…ELEA), 2379–2408 (TKDT…NKEH), 2412–2441 (SDYT…EINS), 2447–2476 (LGIS…DINA), 2481–2510 (NRNT…NVEH), 2514–2543 (TGLT…DVNA), 2549–2578 (SRDT…SVEV), 2582–2611 (KGNS…DIDS), and 2615–2644 (RRVS…QFPS). A coiled-coil region spans residues 2674–2732 (AKEAQAVKANKNASILLEELDLERTREESRKAAAARRRERKKKKKMEKKEEKRRQQQGN). Ser2687 carries the phosphoserine modification. Position 2698 is a phosphothreonine (Thr2698). The interval 2699-3033 (REESRKAAAA…TSTTTAASSV (335 aa)) is disordered. Over residues 2706-2719 (AAARRRERKKKKKM) the composition is skewed to basic residues. Residues 2739-2762 (MQGDDDDASDKDDDSDKDDEDEEA) show a composition bias toward acidic residues. A phosphoserine mark is found at Ser2747 and Ser2753. Residues 2793–2810 (SQSAQAAEAAANSVSTNS) show a composition bias toward low complexity. Positions 2828–2839 (EPTQPVITSNSV) are enriched in polar residues. Basic and acidic residues predominate over residues 2868 to 2886 (RQLDVKKEEPALKKKEEKN). The segment covering 2906–2941 (ALPAKQQPSSSSKLQSSESASNINSSTATNTSSANT) has biased composition (low complexity). Over residues 2950–2960 (ASQTASATTLN) the composition is skewed to polar residues. A compositionally biased stretch (basic and acidic residues) spans 2963 to 2975 (KRTEVDGWKEVVR). Polar residues predominate over residues 2995–3004 (TATSSATSVQ). Positions 3012–3032 (ANSSSNSSSSLTTSTTTAASS) are enriched in low complexity. Residues 3036–3100 (MTCKKVQVPV…DATKQAHMLI (65 aa)) form the KH domain. Low complexity-rich tracts occupy residues 3156–3178 (ASTT…ASYS), 3195–3227 (SGRS…AGSS), and 3244–3257 (NGVI…SSKS). Disordered stretches follow at residues 3156-3329 (ASTT…GQGG), 3383-3457 (KPIA…QTSQ), 3520-3636 (AVGD…PPTA), and 3744-3786 (IFPQ…GGAA). A compositionally biased stretch (polar residues) spans 3262–3278 (QKSSTTLGKSSTVSPGA). Residues 3396 to 3416 (GSPTQVQQQHQTQQQQQQQLP) show a composition bias toward low complexity. The segment covering 3417-3427 (QPAPVPGPQPQ) has biased composition (pro residues). A compositionally biased stretch (low complexity) spans 3428–3457 (QQPLQQQQQQQAPQQQPQQPNQQQQPQTSQ). Residues 3539–3559 (NILSSPVGSSKASSNHSTSPP) are compositionally biased toward polar residues. Positions 3565-3577 (QQQQQQQPQSSQQ) are enriched in low complexity. Ser3596 carries the phosphoserine modification. Residues 3774-3786 (PPGTGARQPGGAA) are compositionally biased toward low complexity. Ser3820, Ser3822, and Ser3825 each carry phosphoserine. Residues 3876–3945 (KAQPPGLQQP…HNMQAPPNMS (70 aa)) are disordered. Positions 3891–3910 (SQQQQQQPLNWLKQQPQQQQ) are enriched in low complexity.

In terms of assembly, may interact with Unc-89 (via protein kinase domain 1 or 2). As to expression, expressed ubiquitously in eye imaginal disk, slightly higher expression is seen in presumptive photoreceptors. Expressed in indirect flight muscle (IFM) (at protein level).

It is found in the cytoplasm. The protein localises to the myofibril. The protein resides in the sarcomere. Its subcellular location is the z line. It localises to the m line. In terms of biological role, mediator of receptor tyrosine kinase (RTK) signaling, and may act either downstream of MAPK or transduce signaling through a parallel branch of the RTK pathway. Required for the development and organization of indirect flight muscle sarcomeres by regulating the formation of M line and H zone and the correct assembly of thick and thin filaments in the sarcomere. The protein is Ankyrin repeat and KH domain-containing protein mask of Drosophila melanogaster (Fruit fly).